The sequence spans 234 residues: Small ribosomal subunit protein uS3 (234 aa).

The region spanning 39 to 107 (IRKFLKKELY…EVSINIKEVK (69 aa)) is the KH type-2 domain.

Belongs to the universal ribosomal protein uS3 family. Part of the 30S ribosomal subunit. Forms a tight complex with proteins S10 and S14.

Functionally, binds the lower part of the 30S subunit head. Binds mRNA in the 70S ribosome, positioning it for translation. The polypeptide is Small ribosomal subunit protein uS3 (Helicobacter pylori (strain P12)).